The primary structure comprises 308 residues: Methionyl-tRNA formyltransferase (308 aa).

Residue 110 to 113 (SLLP) coordinates (6S)-5,6,7,8-tetrahydrofolate.

It belongs to the Fmt family.

It catalyses the reaction L-methionyl-tRNA(fMet) + (6R)-10-formyltetrahydrofolate = N-formyl-L-methionyl-tRNA(fMet) + (6S)-5,6,7,8-tetrahydrofolate + H(+). Its function is as follows. Attaches a formyl group to the free amino group of methionyl-tRNA(fMet). The formyl group appears to play a dual role in the initiator identity of N-formylmethionyl-tRNA by promoting its recognition by IF2 and preventing the misappropriation of this tRNA by the elongation apparatus. In Neisseria gonorrhoeae (strain NCCP11945), this protein is Methionyl-tRNA formyltransferase.